The sequence spans 145 residues: 3-dehydroquinate dehydratase (145 aa).

Tyr24 serves as the catalytic Proton acceptor. Asn75, His81, and Asp88 together coordinate substrate. Catalysis depends on His101, which acts as the Proton donor. Substrate contacts are provided by residues 102 to 103 (IS) and Arg112.

The protein belongs to the type-II 3-dehydroquinase family. As to quaternary structure, homododecamer.

It catalyses the reaction 3-dehydroquinate = 3-dehydroshikimate + H2O. Its pathway is metabolic intermediate biosynthesis; chorismate biosynthesis; chorismate from D-erythrose 4-phosphate and phosphoenolpyruvate: step 3/7. Catalyzes a trans-dehydration via an enolate intermediate. The chain is 3-dehydroquinate dehydratase (aroQ) from Corynebacterium glutamicum (strain ATCC 13032 / DSM 20300 / JCM 1318 / BCRC 11384 / CCUG 27702 / LMG 3730 / NBRC 12168 / NCIMB 10025 / NRRL B-2784 / 534).